The sequence spans 942 residues: Isoleucine--tRNA ligase (942 aa).

The 'HIGH' region signature appears at 58–68; it reads PYVNGSIHLGH. Glu-564 contacts L-isoleucyl-5'-AMP. A 'KMSKS' region motif is present at residues 605–609; that stretch reads KMSKS. Residue Lys-608 participates in ATP binding. Zn(2+) contacts are provided by Cys-905, Cys-908, Cys-925, and Cys-928.

It belongs to the class-I aminoacyl-tRNA synthetase family. IleS type 1 subfamily. In terms of assembly, monomer. Zn(2+) is required as a cofactor.

The protein localises to the cytoplasm. The enzyme catalyses tRNA(Ile) + L-isoleucine + ATP = L-isoleucyl-tRNA(Ile) + AMP + diphosphate. Functionally, catalyzes the attachment of isoleucine to tRNA(Ile). As IleRS can inadvertently accommodate and process structurally similar amino acids such as valine, to avoid such errors it has two additional distinct tRNA(Ile)-dependent editing activities. One activity is designated as 'pretransfer' editing and involves the hydrolysis of activated Val-AMP. The other activity is designated 'posttransfer' editing and involves deacylation of mischarged Val-tRNA(Ile). In Blochmanniella pennsylvanica (strain BPEN), this protein is Isoleucine--tRNA ligase.